Reading from the N-terminus, the 820-residue chain is Leucine--tRNA ligase (820 aa).

The 'HIGH' region signature appears at 40–51; sequence PYPSGAGLHVGH. The short motif at 601-605 is the 'KMSKS' region element; sequence KMSKS. ATP is bound at residue Lys-604.

It belongs to the class-I aminoacyl-tRNA synthetase family.

It localises to the cytoplasm. The catalysed reaction is tRNA(Leu) + L-leucine + ATP = L-leucyl-tRNA(Leu) + AMP + diphosphate. The polypeptide is Leucine--tRNA ligase (Chlamydia abortus (strain DSM 27085 / S26/3) (Chlamydophila abortus)).